We begin with the raw amino-acid sequence, 254 residues long: N-acetylglucosamine-induced protein 1 (254 aa).

It is found in the cytoplasm. In terms of biological role, N-acetylglucosamine-induced protein which plays a role in the N-acetylglucosamine metabolic pathway. This is N-acetylglucosamine-induced protein 1 from Candida albicans (strain SC5314 / ATCC MYA-2876) (Yeast).